Here is a 921-residue protein sequence, read N- to C-terminus: TRPM8 channel-associated factor 1 (921 aa).

The Peptidase M60 domain maps to 542-841 (YCWMSTGLYI…TYLQLQEAFG (300 aa)).

It belongs to the TCAF family. In terms of assembly, interacts with TRPM8 (via N-terminus and C-terminus domains); the interaction inhibits TRPM8 channel activity. Interacts with TRPV6.

It is found in the cell membrane. Functionally, positively regulates the plasma membrane cation channel TRPM8 activity. Involved in the recruitment of TRPM8 to the cell surface. Promotes prostate cancer cell migration inhibition in a TRPM8-dependent manner. This Bos taurus (Bovine) protein is TRPM8 channel-associated factor 1.